A 773-amino-acid polypeptide reads, in one-letter code: Beta-hexosaminidase B (773 aa).

A signal peptide spans 1–19 (MKFNRLMALLFGVSSPLYA). 3 disulfides stabilise this stretch: Cys-46–Cys-53, Cys-389–Cys-397, and Cys-496–Cys-542. The Proton donor role is filled by Glu-531.

It belongs to the glycosyl hydrolase 20 family.

It carries out the reaction Hydrolysis of terminal non-reducing N-acetyl-D-hexosamine residues in N-acetyl-beta-D-hexosaminides.. The polypeptide is Beta-hexosaminidase B (nag096) (Pseudoalteromonas piscicida).